The sequence spans 216 residues: Adenylate kinase (216 aa).

Position 10–15 (10–15 (GAGKGT)) interacts with ATP. The tract at residues 30 to 59 (STGDIFRANIKEKTPLGIEAKRYIDNGQLV) is NMP. AMP-binding positions include T31, R36, 57 to 59 (QLV), 85 to 88 (GFPR), and Q92. The LID stretch occupies residues 126–163 (GRRVCTSCGASYHIRFNPPKIEGKCDICDNELIQRKDD). An ATP-binding site is contributed by R127. Residues C130 and C133 each coordinate Zn(2+). Residue 136-137 (SY) participates in ATP binding. 2 residues coordinate Zn(2+): C150 and C153. Residues R160 and R171 each coordinate AMP. E199 contacts ATP.

Belongs to the adenylate kinase family. In terms of assembly, monomer.

It localises to the cytoplasm. The enzyme catalyses AMP + ATP = 2 ADP. It participates in purine metabolism; AMP biosynthesis via salvage pathway; AMP from ADP: step 1/1. Functionally, catalyzes the reversible transfer of the terminal phosphate group between ATP and AMP. Plays an important role in cellular energy homeostasis and in adenine nucleotide metabolism. The chain is Adenylate kinase from Clostridium botulinum (strain ATCC 19397 / Type A).